We begin with the raw amino-acid sequence, 207 residues long: Dephospho-CoA kinase (207 aa).

One can recognise a DPCK domain in the interval 12–207 (LIGITGMIGG…LYSTLLGKML (196 aa)). An ATP-binding site is contributed by 20-25 (GGGKST).

Belongs to the CoaE family.

The protein localises to the cytoplasm. The catalysed reaction is 3'-dephospho-CoA + ATP = ADP + CoA + H(+). It participates in cofactor biosynthesis; coenzyme A biosynthesis; CoA from (R)-pantothenate: step 5/5. Catalyzes the phosphorylation of the 3'-hydroxyl group of dephosphocoenzyme A to form coenzyme A. The polypeptide is Dephospho-CoA kinase (Leptospira interrogans serogroup Icterohaemorrhagiae serovar copenhageni (strain Fiocruz L1-130)).